Reading from the N-terminus, the 207-residue chain is dTDP-4-dehydrorhamnose 3-epimerase (207 aa).

Residues Arg23, Asp28, 47–49 (QAN), and Arg59 each bind substrate. His62 functions as the Proton acceptor in the catalytic mechanism. 2 residues coordinate substrate: Lys72 and His119. The Proton donor role is filled by Tyr132. Substrate-binding residues include Glu143 and Arg167.

It belongs to the dTDP-4-dehydrorhamnose 3,5-epimerase family.

Its pathway is antibiotic biosynthesis; novobiocin biosynthesis. DTDP-6-deoxy-D-xylo-4-hexulose 3-epimerase that acts together with NovU to catalyze the formation of dTDP-4-keto-6-deoxy-5-C-methyl-L-lyxo-hexose from dTDP-4-keto-6-deoxy-D-glucose in the novobiocin biosynthesis pathway, an aminocoumarin family antibiotic that targets bacterial DNA gyrases. The chain is dTDP-4-dehydrorhamnose 3-epimerase from Streptomyces niveus (Streptomyces spheroides).